Consider the following 1846-residue polypeptide: Brefeldin A-inhibited guanine nucleotide-exchange protein 1 (1846 aa).

The interval 2-224 is DCB; DCB:DCB domain and DCB:HUS domain interaction; the sequence is YEGKKTKNMF…QEAKQMERER (223 aa). Residue Ser-52 is modified to Phosphoserine. 3 disordered regions span residues 216 to 249, 264 to 304, and 347 to 410; these read EAKQ…LRYL, DLEP…ATAA, and ISAS…SPGA. A compositionally biased stretch (basic and acidic residues) spans 264 to 277; the sequence is DLEPQTHDVDKSLQ. Ser-286, Ser-289, and Ser-290 each carry phosphoserine. Polar residues-rich tracts occupy residues 348 to 357 and 391 to 406; these read SASTEGNTGT and SVSS…SSGP. A phosphoserine mark is found at Ser-394 and Ser-407. Residues 554–574 are HUS; DCB:HUS domain interaction; sequence ADAQSVVDIYVNYDCDLNAAN. A disordered region spans residues 631–684; it reads PNSQTTLGQEKPSEQEISEVKHPETINRYGSLNSLESTSSSGIGSYSTQMSGTD. Positions 641–655 are enriched in basic and acidic residues; sequence KPSEQEISEVKHPET. Positions 661–681 are enriched in low complexity; it reads SLNSLESTSSSGIGSYSTQMS. An SEC7 domain is found at 688 to 877; the sequence is QFEVLKQQKE…SAIYNEIAGK (190 aa). A Nuclear localization signal (NLS) motif is present at residues 708–712; sequence KKPKR. Phosphoserine is present on residues Ser-1076, Ser-1563, and Ser-1566.

In terms of assembly, homodimer. Interacts with ARFGEF2/BIG2; both proteins are probably part of the same or very similar macromolecular complexes. Interacts with FKBP2. Interacts with MYO9B. Interacts with PRKAR1A and PRKAR2A. Interacts with PPP1CC. Interacts with NCL, FBL, NUP62 and U3 small nucleolar RNA. Interacts with DPY30. Interacts with PDE3A. Interacts with KANK1. Interacts with TBC1D22A and TBC1D22B. Post-translationally, phosphorylated. In vitro phosphorylated by PKA reducing its GEF activity and dephosphorylated by phosphatase PP1.

It is found in the cytoplasm. The protein localises to the perinuclear region. The protein resides in the golgi apparatus. Its subcellular location is the trans-Golgi network. It localises to the nucleus. It is found in the nucleolus. The protein localises to the nucleus matrix. The protein resides in the membrane. With respect to regulation, inhibited by brefeldin A. In terms of biological role, promotes guanine-nucleotide exchange on ARF1 and ARF3. Promotes the activation of ARF1/ARF3 through replacement of GDP with GTP. Involved in vesicular trafficking. Required for the maintenance of Golgi structure; the function may be independent of its GEF activity. Required for the maturation of integrin beta-1 in the Golgi. Involved in the establishment and persistence of cell polarity during directed cell movement in wound healing. Proposed to act as A kinase-anchoring protein (AKAP) and may mediate crosstalk between Arf and PKA pathways. Inhibits GAP activity of MYO9B probably through competitive RhoA binding. The function in the nucleus remains to be determined. The sequence is that of Brefeldin A-inhibited guanine nucleotide-exchange protein 1 (Arfgef1) from Mus musculus (Mouse).